A 215-amino-acid chain; its full sequence is MSSTEEKFSLKEVLVSFKSCLVDDDQDIIVEQYLNGWKGLVRFMNSLGTIFSFVSKDAVTKIQIMENYLAGTNGERYRTLQSMVEHELSSDLVDLTKRCNNPDSGCRTILRLHRALRWLQLFLEKLRTSNEDSKTSTLCTEAYNDSLANFHPWIIRKTATVAFLALPTRNTFFEVMNVGTTEEVVAMLGESMPYVTKVYDFTHEIYSQHNLLELP.

An N-acylsphingoid base 1-phosphate-binding residues include Asp-57, Lys-61, Arg-107, Arg-111, and His-151.

The protein belongs to the GLTP family.

Its subcellular location is the cytoplasm. The protein resides in the cytosol. The protein localises to the golgi apparatus. It localises to the trans-Golgi network membrane. It is found in the cell membrane. Its subcellular location is the endosome membrane. The protein resides in the nucleus outer membrane. It catalyses the reaction N-(hexadecanoyl)-sphing-4-enine-1-phosphate(in) = N-(hexadecanoyl)-sphing-4-enine-1-phosphate(out). The enzyme catalyses N-(9Z-octadecenoyl)-sphing-4-enine-1-phosphate(in) = N-(9Z-octadecenoyl)-sphing-4-enine-1-phosphate(out). Mediates the intracellular transfer of ceramide-1-phosphate (C1P) between organelle membranes and the cell membrane. Required for normal structure of the Golgi stacks. Can bind phosphoceramides with a variety of aliphatic chains, but has a preference for lipids with saturated C16:0 or monounsaturated C18:1 aliphatic chains, and is inefficient with phosphoceramides containing lignoceryl (C24:0). Plays a role in the regulation of the cellular levels of ceramide-1-phosphate, and thereby contributes to the regulation of phospholipase PLA2G4A activity and the release of arachidonic acid. Has no activity with galactosylceramide, lactosylceramide, sphingomyelin, phosphatidylcholine, phosphatidic acid and ceramide. C1P transfer is stimulated by phosphatidylserine in C1P source vesicles. Regulates autophagy and pyroptosis, but not apoptosis. This chain is Ceramide-1-phosphate transfer protein (cptp), found in Xenopus tropicalis (Western clawed frog).